The sequence spans 382 residues: Mannitol-1-phosphate 5-dehydrogenase (382 aa).

NAD(+) is bound at residue 3–14; the sequence is ALHFGAGNIGRG.

This sequence belongs to the mannitol dehydrogenase family.

The catalysed reaction is D-mannitol 1-phosphate + NAD(+) = beta-D-fructose 6-phosphate + NADH + H(+). This chain is Mannitol-1-phosphate 5-dehydrogenase, found in Salmonella newport (strain SL254).